Here is a 224-residue protein sequence, read N- to C-terminus: Ribose-5-phosphate isomerase A (224 aa).

Substrate contacts are provided by residues 32 to 35 (TGST), 85 to 88 (DGAD), and 98 to 101 (KGGG). Glutamate 107 (proton acceptor) is an active-site residue. Residue lysine 125 coordinates substrate.

Belongs to the ribose 5-phosphate isomerase family. Homodimer.

It carries out the reaction aldehydo-D-ribose 5-phosphate = D-ribulose 5-phosphate. Its pathway is carbohydrate degradation; pentose phosphate pathway; D-ribose 5-phosphate from D-ribulose 5-phosphate (non-oxidative stage): step 1/1. Its function is as follows. Catalyzes the reversible conversion of ribose-5-phosphate to ribulose 5-phosphate. The polypeptide is Ribose-5-phosphate isomerase A (Pseudomonas entomophila (strain L48)).